The following is a 358-amino-acid chain: Snurportin-1 (358 aa).

Position 1 is an N-acetylmethionine (Met-1). Disordered regions lie at residues 1-39 (MEEL…SSLE) and 69-89 (DWTG…EMDL). Residues 1–65 (MEELSQALAS…LDYVNHARRL (65 aa)) form a necessary for interaction with KPNB1 and m3G-cap U1 and U5 snRNP import receptor activity region. The segment at 1–160 (MEELSQALAS…NRFSSLLPGG (160 aa)) is necessary for interaction with XPO1. Composition is skewed to polar residues over residues 7–22 (ALAS…NSTA) and 30–39 (QYKSKYSSLE). In terms of domain architecture, IBB spans 11–73 (SFSVSQELNS…RLAEDDWTGM (63 aa)). Ser-75 is subject to Phosphoserine. An interaction with m3G-cap structure region spans residues 128 to 130 (GKR). The tract at residues 210–329 (MNSKLPEEEG…DTKEKLTHKA (120 aa)) is necessary for binding to the m3G-cap structure. Residues 315-341 (KRSQEDTKEKLTHKASENGHYELEHLS) show a composition bias toward basic and acidic residues. Residues 315–358 (KRSQEDTKEKLTHKASENGHYELEHLSTPKLRSPPHSSESLMDS) form a disordered region. A compositionally biased stretch (polar residues) spans 349-358 (PHSSESLMDS). Phosphoserine is present on Ser-351.

The protein belongs to the snurportin family. As to quaternary structure, component of an import snRNP complex composed of KPNB1, SNUPN, SMN1 and ZNF259. Component of a nuclear export receptor complex composed of KPNB1, Ran, SNUPN and XPO1. Found in a trimeric export complex with SNUPN, Ran and XPO1. Interacts (via IBB domain) with KPNB1; the interaction is direct. Interacts with DDX20, IPO7, SMN1, SNRPB and XPO1. Interacts directly with XPO1. Its interaction with XPO1 and binding to m3G-cap U snRNPs appears to be mutually exclusive. Can form homomers.

It localises to the nucleus. It is found in the cytoplasm. In terms of biological role, functions as an U snRNP-specific nuclear import adapter. Involved in the trimethylguanosine (m3G)-cap-dependent nuclear import of U snRNPs. Binds specifically to the terminal m3G-cap U snRNAs. This Rattus norvegicus (Rat) protein is Snurportin-1 (Snupn).